The following is a 360-amino-acid chain: Mannose-1-phosphate guanyltransferase beta-B (360 aa).

This sequence belongs to the transferase hexapeptide repeat family.

It catalyses the reaction alpha-D-mannose 1-phosphate + GTP + H(+) = GDP-alpha-D-mannose + diphosphate. Its pathway is nucleotide-sugar biosynthesis; GDP-alpha-D-mannose biosynthesis; GDP-alpha-D-mannose from alpha-D-mannose 1-phosphate (GTP route): step 1/1. In terms of biological role, catalyzes the formation of GDP-mannose, an essential precursor of glycan moieties of glycoproteins and glycolipids. The polypeptide is Mannose-1-phosphate guanyltransferase beta-B (gmppb-b) (Xenopus laevis (African clawed frog)).